The primary structure comprises 533 residues: Berberine bridge enzyme-like 28 (533 aa).

A signal peptide spans Met1–Ala23. Cys34 and Cys96 are disulfide-bonded. Positions Glu74–Val249 constitute an FAD-binding PCMH-type domain. At His111 the chain carries Pros-8alpha-FAD histidine. Residues Asn142 and Asn440 are each glycosylated (N-linked (GlcNAc...) asparagine).

It belongs to the oxygen-dependent FAD-linked oxidoreductase family. FAD serves as cofactor.

Its subcellular location is the secreted. It localises to the cell wall. Involved in adaptation to salt stress. The polypeptide is Berberine bridge enzyme-like 28 (Arabidopsis thaliana (Mouse-ear cress)).